A 741-amino-acid chain; its full sequence is Lamin-B receptor (741 aa).

The tract at residues 29–126 is disordered; it reads RLRRPRRTED…TGSGSGSSLP (98 aa). 2 stretches are compositionally biased toward low complexity: residues 57 to 84 and 109 to 126; these read TRRTGSVTAAGATATATATAGPATRTRA and PRSSVGPLTGSGSGSSLP. S111 bears the Phosphoserine mark. Position 135 is a phosphothreonine (T135). The residue at position 144 (S144) is a Phosphoserine. Over residues 160 to 184 the composition is skewed to polar residues; that stretch reads TNTSSGAPNKAFNTSSVNSGNSFSR. Residues 160–194 are disordered; that stretch reads TNTSSGAPNKAFNTSSVNSGNSFSRTTTSSTTTTT. Low complexity predominate over residues 185–194; it reads TTTSSTTTTT. A phosphoserine mark is found at S223 and S225. The span at 231 to 240 shows a compositional bias: polar residues; the sequence is LAGTPVTNTE. A disordered region spans residues 231 to 277; that stretch reads LAGTPVTNTEEGSRYSRSVSRSVYDDEKSSKRSYSTGEEDIDEEDEL. Phosphothreonine occurs at positions 234 and 237. 5 positions are modified to phosphoserine: S243, S246, S248, S250, and S263. Position 266 is a phosphothreonine (T266). A compositionally biased stretch (acidic residues) spans 267-277; sequence GEEDIDEEDEL. S284 carries the phosphoserine modification. T288 carries the phosphothreonine modification. S291 is subject to Phosphoserine. T293 is modified (phosphothreonine). A Phosphoserine modification is found at S298. 8 consecutive transmembrane segments (helical) span residues 308–328, 363–383, 402–422, 429–449, 497–517, 543–563, 577–599, and 604–624; these read FGGWLGAFLFLLLLPTAVYYL, VVGAFAAYQVVVFLLVALLPG, LTLLIASGVAEYLKYPVVTFV, FCIFGLVGAFVAAAWSYWLVD, LSLVTTLIYATCYIYQTLVWP, PATLFSASCLLFYVLDAIIFE, YGCLLLLRYAATPYLLTAVTKYF, and VPISCWYAPLAVAALLSLGLL. S640 and S642 each carry phosphoserine. The chain crosses the membrane as a helical span at residues 687-707; the sequence is MALRPAWPPVLGLSLIILLLL.

It belongs to the ERG4/ERG24 family. As to quaternary structure, interacts directly with LAM.

It localises to the nucleus inner membrane. In terms of biological role, anchors the lamina and the heterochromatin to the inner nuclear membrane. In Drosophila melanogaster (Fruit fly), this protein is Lamin-B receptor.